A 204-amino-acid chain; its full sequence is Phosphopantothenoylcysteine decarboxylase (204 aa).

Residues Thr53 and 104-107 (DANT) contribute to the FMN site. Asn140 is a substrate binding site. Cys173 functions as the Proton donor in the catalytic mechanism.

The protein belongs to the HFCD (homooligomeric flavin containing Cys decarboxylase) superfamily. Homotrimer. Requires FMN as cofactor.

The catalysed reaction is N-[(R)-4-phosphopantothenoyl]-L-cysteine + H(+) = (R)-4'-phosphopantetheine + CO2. Its pathway is cofactor biosynthesis; coenzyme A biosynthesis; CoA from (R)-pantothenate: step 3/5. Catalyzes the decarboxylation of the cysteine moiety of 4-phosphopantothenoylcysteine to form 4'-phosphopantotheine and this reaction forms part of the biosynthesis of coenzyme A. In Mus musculus (Mouse), this protein is Phosphopantothenoylcysteine decarboxylase (Ppcdc).